The primary structure comprises 177 residues: ATP synthase subunit delta (177 aa).

It belongs to the ATPase delta chain family. In terms of assembly, F-type ATPases have 2 components, F(1) - the catalytic core - and F(0) - the membrane proton channel. F(1) has five subunits: alpha(3), beta(3), gamma(1), delta(1), epsilon(1). F(0) has three main subunits: a(1), b(2) and c(10-14). The alpha and beta chains form an alternating ring which encloses part of the gamma chain. F(1) is attached to F(0) by a central stalk formed by the gamma and epsilon chains, while a peripheral stalk is formed by the delta and b chains.

The protein resides in the cell membrane. In terms of biological role, f(1)F(0) ATP synthase produces ATP from ADP in the presence of a proton or sodium gradient. F-type ATPases consist of two structural domains, F(1) containing the extramembraneous catalytic core and F(0) containing the membrane proton channel, linked together by a central stalk and a peripheral stalk. During catalysis, ATP synthesis in the catalytic domain of F(1) is coupled via a rotary mechanism of the central stalk subunits to proton translocation. Functionally, this protein is part of the stalk that links CF(0) to CF(1). It either transmits conformational changes from CF(0) to CF(1) or is implicated in proton conduction. This is ATP synthase subunit delta from Carboxydothermus hydrogenoformans (strain ATCC BAA-161 / DSM 6008 / Z-2901).